An 802-amino-acid polypeptide reads, in one-letter code: Phenylalanine--tRNA ligase beta subunit (802 aa).

In terms of domain architecture, tRNA-binding spans 39 to 154 (AEGLSKLVVG…EDAVPGDSIF (116 aa)). A B5 domain is found at 407–482 (TEPVQVSTSL…RIYGYEKLPT (76 aa)). Residues Asp460, Asp466, Glu469, and Glu470 each contribute to the Mg(2+) site. Positions 709–802 (TKFPAVSRDI…LTEKVEAEVR (94 aa)) constitute an FDX-ACB domain.

This sequence belongs to the phenylalanyl-tRNA synthetase beta subunit family. Type 1 subfamily. In terms of assembly, tetramer of two alpha and two beta subunits. The cofactor is Mg(2+).

It localises to the cytoplasm. The catalysed reaction is tRNA(Phe) + L-phenylalanine + ATP = L-phenylalanyl-tRNA(Phe) + AMP + diphosphate + H(+). The protein is Phenylalanine--tRNA ligase beta subunit of Streptococcus thermophilus (strain CNRZ 1066).